Reading from the N-terminus, the 157-residue chain is Glutathione peroxidase homolog BsaA (157 aa).

C35 is an active-site residue.

The protein belongs to the glutathione peroxidase family.

In Halalkalibacterium halodurans (strain ATCC BAA-125 / DSM 18197 / FERM 7344 / JCM 9153 / C-125) (Bacillus halodurans), this protein is Glutathione peroxidase homolog BsaA (bsaA).